The primary structure comprises 364 residues: Guanine nucleotide-binding protein alpha-8 subunit (364 aa).

Gly-2 carries the N-myristoyl glycine lipid modification. Cys-5 carries the S-palmitoyl cysteine lipid modification. The G-alpha domain occupies 38–364 (KILKLLILGP…QHTMQKVGIQ (327 aa)). Residues 41 to 54 (KLLILGPGESGKST) are G1 motif. Residues 46 to 53 (GPGESGKS), 186 to 192 (LKSRVPT), 211 to 215 (DVGGQ), 280 to 283 (NKID), and Ala-336 each bind GTP. Positions 53 and 192 each coordinate Mg(2+). Positions 184–192 (DILKSRVPT) are G2 motif. Positions 207 to 216 (FKIFDVGGQR) are G3 motif. The G4 motif stretch occupies residues 276-283 (ILFLNKID). The tract at residues 334–339 (TCATDT) is G5 motif.

The protein belongs to the G-alpha family. G proteins are composed of 3 units; alpha, beta and gamma. The alpha chain contains the guanine nucleotide binding site.

Its function is as follows. Guanine nucleotide-binding proteins (G proteins) are involved as modulators or transducers in various transmembrane signaling systems. The sequence is that of Guanine nucleotide-binding protein alpha-8 subunit (gpa-8) from Caenorhabditis briggsae.